The sequence spans 137 residues: Basic phospholipase A2 beta-bungarotoxin A5 chain (137 aa).

The N-terminal stretch at 1–9 (AVCVSLLGA) is a signal peptide. The propeptide occupies 10-17 (ANIPPQHL). Disulfide bonds link Cys44–Cys136, Cys46–Cys62, Cys61–Cys117, Cys68–Cys110, Cys78–Cys103, and Cys96–Cys108. 3 residues coordinate Ca(2+): Tyr45, Gly47, and Gly49. His65 is an active-site residue. Asp66 contacts Ca(2+). Residue Asp111 is part of the active site.

This sequence belongs to the phospholipase A2 family. Group I subfamily. D49 sub-subfamily. In terms of assembly, heterodimer; disulfide-linked. The A chains have phospholipase A2 activity and the B chains show homology with the basic protease inhibitors. It depends on Ca(2+) as a cofactor. Expressed by the venom gland.

Its subcellular location is the secreted. It carries out the reaction a 1,2-diacyl-sn-glycero-3-phosphocholine + H2O = a 1-acyl-sn-glycero-3-phosphocholine + a fatty acid + H(+). Its function is as follows. Snake venom phospholipase A2 (PLA2) that inhibits neuromuscular transmission by blocking acetylcholine release from the nerve termini. PLA2 catalyzes the calcium-dependent hydrolysis of the 2-acyl groups in 3-sn-phosphoglycerides. The polypeptide is Basic phospholipase A2 beta-bungarotoxin A5 chain (Bungarus multicinctus (Many-banded krait)).